The chain runs to 1030 residues: ATPase MORC2A (1030 aa).

Ala2 bears the N-acetylalanine mark. Residues Asn39, 87-89 (SAK), and 99-105 (QYGNGLK) each bind ATP. A Mg(2+)-binding site is contributed by Asn39. Positions 285-362 (KTRAEQEVKK…KDAKQRALKE (78 aa)) form a coiled coil. ATP is bound at residue Lys427. The CW-type zinc-finger motif lies at 490–544 (AMEIPTTIQCDLCLKWRTLPFQLSSVETDYPDTWVCSMNPDPEQDRCEASEQKQK). Zn(2+) is bound by residues Cys499, Cys502, Cys525, and Cys536. The segment at 530–791 (DPEQDRCEAS…HPAELRKAQK (262 aa)) is disordered. Composition is skewed to basic and acidic residues over residues 532–543 (EQDRCEASEQKQ) and 550–577 (LKKDPKTQEEKQKQLTEKIRQQQEKLEA). Positions 555-583 (KTQEEKQKQLTEKIRQQQEKLEALQKTTP) form a coiled coil. Phosphothreonine is present on Thr582. Ser614 carries the phosphoserine modification. Positions 629 to 646 (PSIQTPRPSTQLRKTSVI) are enriched in polar residues. Residues Lys650 and Lys702 each participate in a glycyl lysine isopeptide (Lys-Gly) (interchain with G-Cter in SUMO2) cross-link. Residues 693–702 (PPLSLIPSSK) show a composition bias toward low complexity. Ser703 carries the post-translational modification Phosphoserine. Lys714 participates in a covalent cross-link: Glycyl lysine isopeptide (Lys-Gly) (interchain with G-Cter in SUMO2). Ser728 bears the Phosphoserine mark. Thr731 is modified (phosphothreonine). Residues Ser737 and Ser741 each carry the phosphoserine modification. Residues 738–775 (LAVSDEEEAEEEAEKRRERCKRGKLAVKEEKKEANELS) adopt a coiled-coil conformation. Positions 763–772 (AVKEEKKEAN) are enriched in basic and acidic residues. A Glycyl lysine isopeptide (Lys-Gly) (interchain with G-Cter in SUMO2) cross-link involves residue Lys765. Phosphoserine occurs at positions 775 and 777. The span at 779–791 (GEDHPAELRKAQK) shows a compositional bias: basic and acidic residues. A Glycyl lysine isopeptide (Lys-Gly) (interchain with G-Cter in SUMO2) cross-link involves residue Lys817. Thr834 bears the Phosphothreonine mark. The segment covering 837-849 (DRWVEKGSEDVRL) has biased composition (basic and acidic residues). Disordered stretches follow at residues 837–874 (DRWVEKGSEDVRLMKPPSPEHQSPDTQQEGGEEEEAMV) and 882–901 (PEPSTSDGLPIEPDTTATSP). Residues Ser854 and Ser859 each carry the phosphoserine modification. Polar residues predominate over residues 856-865 (EHQSPDTQQE). Lys930 is covalently cross-linked (Glycyl lysine isopeptide (Lys-Gly) (interchain with G-Cter in SUMO2)). Residues 966–1011 (RADSRAKASEESLRTSEKKLRETEEKLQKLRTNIVALLQKVQEDID) are a coiled coil.

Homodimerizes upon ATP-binding and dissociate upon ATP hydrolysis; homodimerization is required for gene silencing. Binds histone H3 independently of the methylation status at 'Lys-9'. Interacts with HDAC4. Interacts with FAM208A/TASOR and MPHOSPH8; the interactions associate MORC2 with the HUSH complex which recruits MORC2 to heterochromatic loci. Interacts with Morc2b. In terms of processing, phosphorylated by PAK1 at Ser-737 upon DNA damage. Phosphorylation is required for ATPase activity and recruitment to damaged chromatin. In terms of tissue distribution, expressed in the axons and Schwann cells of peripheral nerves. Expressed in testes.

Its subcellular location is the nucleus. It is found in the cytoplasm. The protein resides in the cytosol. It localises to the chromosome. The protein localises to the nucleus matrix. The enzyme catalyses ATP + H2O = ADP + phosphate + H(+). With respect to regulation, ATPase activity is dependent of phosphorylation by PAK1 and presence of DNA. Essential for epigenetic silencing by the HUSH complex. Recruited by HUSH to target site in heterochromatin, the ATPase activity and homodimerization are critical for HUSH-mediated silencing. Represses germ cell-related genes and L1 retrotransposons in collaboration with SETDB1 and the HUSH complex, the silencing is dependent of repressive epigenetic modifications, such as H3K9me3 mark. Silencing events often occur within introns of transcriptionally active genes, and lead to the down-regulation of host gene expression. During DNA damage response, regulates chromatin remodeling through ATP hydrolysis. During DNA damage response, may regulate chromatin remodeling through ATP hydrolysis. The polypeptide is ATPase MORC2A (Mus musculus (Mouse)).